Here is a 41-residue protein sequence, read N- to C-terminus: Cytochrome b559 subunit beta (41 aa).

Residues 16-32 traverse the membrane as a helical segment; it reads WLAVHALAVPTVFFLGS. Histidine 20 is a heme binding site.

The protein belongs to the PsbE/PsbF family. As to quaternary structure, heterodimer of an alpha subunit and a beta subunit. PSII is composed of 1 copy each of membrane proteins PsbA, PsbB, PsbC, PsbD, PsbE, PsbF, PsbH, PsbI, PsbJ, PsbK, PsbL, PsbM, PsbT, PsbX, PsbY, PsbZ, Psb30/Ycf12, at least 3 peripheral proteins of the oxygen-evolving complex and a large number of cofactors. It forms dimeric complexes. The cofactor is heme b.

The protein localises to the plastid. Its subcellular location is the chloroplast thylakoid membrane. Its function is as follows. This b-type cytochrome is tightly associated with the reaction center of photosystem II (PSII). PSII is a light-driven water:plastoquinone oxidoreductase that uses light energy to abstract electrons from H(2)O, generating O(2) and a proton gradient subsequently used for ATP formation. It consists of a core antenna complex that captures photons, and an electron transfer chain that converts photonic excitation into a charge separation. In Nephroselmis olivacea (Green alga), this protein is Cytochrome b559 subunit beta.